Reading from the N-terminus, the 56-residue chain is Large ribosomal subunit protein bL32 (56 aa).

The disordered stretch occupies residues 1–29 (MAVQQNKPSRSKRGMRRSHDALTTSSVSV).

The protein belongs to the bacterial ribosomal protein bL32 family.

This is Large ribosomal subunit protein bL32 from Pectobacterium atrosepticum (strain SCRI 1043 / ATCC BAA-672) (Erwinia carotovora subsp. atroseptica).